The sequence spans 90 residues: Cell division protein CrgA (90 aa).

Residues 1–25 (MPKARVTKNETAPVSSNPSANRTPV) form a disordered region. Positions 9–22 (NETAPVSSNPSANR) are enriched in polar residues. The next 2 helical transmembrane spans lie at 38-58 (VIMFAFMIVGLAWLIINYLVG) and 67-87 (LGAWNYGIGFGLMIIGLLMTM).

The protein belongs to the CrgA family.

It localises to the cell membrane. Functionally, involved in cell division. The polypeptide is Cell division protein CrgA (Corynebacterium glutamicum (strain ATCC 13032 / DSM 20300 / JCM 1318 / BCRC 11384 / CCUG 27702 / LMG 3730 / NBRC 12168 / NCIMB 10025 / NRRL B-2784 / 534)).